The chain runs to 548 residues: Chaperonin GroEL (548 aa).

ATP contacts are provided by residues 30–33 (TLGP), Lys-51, 87–91 (DGTTT), Gly-415, and 479–481 (NAV).

It belongs to the chaperonin (HSP60) family. As to quaternary structure, forms a cylinder of 14 subunits composed of two heptameric rings stacked back-to-back. Interacts with the co-chaperonin GroES.

It localises to the cytoplasm. The catalysed reaction is ATP + H2O + a folded polypeptide = ADP + phosphate + an unfolded polypeptide.. Functionally, together with its co-chaperonin GroES, plays an essential role in assisting protein folding. The GroEL-GroES system forms a nano-cage that allows encapsulation of the non-native substrate proteins and provides a physical environment optimized to promote and accelerate protein folding. The chain is Chaperonin GroEL from Stenotrophomonas maltophilia (Pseudomonas maltophilia).